Here is a 176-residue protein sequence, read N- to C-terminus: Crossover junction endodeoxyribonuclease RuvC (176 aa).

Active-site residues include Asp-7, Glu-67, and Asp-139. Mg(2+) is bound by residues Asp-7, Glu-67, and Asp-139.

This sequence belongs to the RuvC family. In terms of assembly, homodimer which binds Holliday junction (HJ) DNA. The HJ becomes 2-fold symmetrical on binding to RuvC with unstacked arms; it has a different conformation from HJ DNA in complex with RuvA. In the full resolvosome a probable DNA-RuvA(4)-RuvB(12)-RuvC(2) complex forms which resolves the HJ. Mg(2+) serves as cofactor.

It is found in the cytoplasm. The enzyme catalyses Endonucleolytic cleavage at a junction such as a reciprocal single-stranded crossover between two homologous DNA duplexes (Holliday junction).. Its function is as follows. The RuvA-RuvB-RuvC complex processes Holliday junction (HJ) DNA during genetic recombination and DNA repair. Endonuclease that resolves HJ intermediates. Cleaves cruciform DNA by making single-stranded nicks across the HJ at symmetrical positions within the homologous arms, yielding a 5'-phosphate and a 3'-hydroxyl group; requires a central core of homology in the junction. The consensus cleavage sequence is 5'-(A/T)TT(C/G)-3'. Cleavage occurs on the 3'-side of the TT dinucleotide at the point of strand exchange. HJ branch migration catalyzed by RuvA-RuvB allows RuvC to scan DNA until it finds its consensus sequence, where it cleaves and resolves the cruciform DNA. The polypeptide is Crossover junction endodeoxyribonuclease RuvC (Pelobacter propionicus (strain DSM 2379 / NBRC 103807 / OttBd1)).